Here is a 367-residue protein sequence, read N- to C-terminus: Putative methylthioribose-1-phosphate isomerase (367 aa).

Residues 65–67, arginine 106, and glutamine 218 each bind substrate; that span reads RGA. Aspartate 259 (proton donor) is an active-site residue. Residue 269-270 participates in substrate binding; sequence NK.

This sequence belongs to the eIF-2B alpha/beta/delta subunits family. MtnA subfamily.

It carries out the reaction 5-(methylsulfanyl)-alpha-D-ribose 1-phosphate = 5-(methylsulfanyl)-D-ribulose 1-phosphate. Its function is as follows. Catalyzes the interconversion of methylthioribose-1-phosphate (MTR-1-P) into methylthioribulose-1-phosphate (MTRu-1-P). The chain is Putative methylthioribose-1-phosphate isomerase from Sulfolobus acidocaldarius (strain ATCC 33909 / DSM 639 / JCM 8929 / NBRC 15157 / NCIMB 11770).